Consider the following 92-residue polypeptide: UPF0223 protein SPCG_1392 (92 aa).

This sequence belongs to the UPF0223 family.

This is UPF0223 protein SPCG_1392 from Streptococcus pneumoniae (strain CGSP14).